An 851-amino-acid polypeptide reads, in one-letter code: Beta-galactosidase BoGH2A (851 aa).

The N-terminal stretch at 1-19 (MMIGKLKYLMLGGCLILGS) is a signal peptide. A lipid anchor (N-palmitoyl cysteine) is attached at Cys20. Cys20 carries S-diacylglycerol cysteine lipidation. Glu437 functions as the Proton donor in the catalytic mechanism. Glu544 functions as the Nucleophile in the catalytic mechanism.

This sequence belongs to the glycosyl hydrolase 2 family.

The protein resides in the cell inner membrane. The enzyme catalyses Hydrolysis of terminal non-reducing beta-D-galactose residues in beta-D-galactosides.. It functions in the pathway glucan metabolism; xyloglucan degradation. Functionally, catalyzes the hydrolysis of terminal non-reducing beta-D-galactose residues in beta-D-galactosides in xyloglucan degradation, converting 'L' units to 'X' units. In Bacteroides ovatus (strain ATCC 8483 / DSM 1896 / JCM 5824 / BCRC 10623 / CCUG 4943 / NCTC 11153), this protein is Beta-galactosidase BoGH2A.